A 199-amino-acid polypeptide reads, in one-letter code: Protein ASYMMETRIC LEAVES 2 (199 aa).

Residues 8 to 109 (SPCAACKFLR…IDLSCAKSEL (102 aa)) enclose the LOB domain.

This sequence belongs to the LOB domain-containing protein family. In terms of assembly, homo- and heterodimer with AS1. Interacts with AS1. Part of the AS1 repressor complex composed of AS1, LBD6/AS2 and HDA6. Interacts with LFR. In terms of tissue distribution, expressed in young shoots, roots, stems, leaves, flowers and adaxial domains of cotyledonary and leaves primordia.

The protein resides in the nucleus. Functionally, negative regulator of cell proliferation in the adaxial side of leaves. Regulates the formation of a symmetric lamina and the establishment of venation. Positively regulates LATERAL ORGAN BOUNDARIES (LOB) within the shoot apex, and the class III HD-ZIP genes REV, PHB, and PHV. Interacts directly with ASYMMETRIC LEAVES 1 (AS1) to repress the knox homeobox genes KNAT1, KNAT2, and KNAT6 and the abaxial determinants ARF3, KAN2 and YAB5. May act in parallel with the RDR6-SGS3-AGO7 pathway, an endogenous RNA silencing pathway, to regulate the leaf morphogenesis. Required for the binding of AS1 to the KNOX genes. Involved in leaf polarity establishment by functioning cooperatively with RH10 or RID2 to repress abaxial genes ARF3, ARF4, KAN1, KAN2, YAB1 and YAB5, and the knox homeobox genes KNAT1, KNAT2, KNAT6, and STM to promote adaxial development in leaf primordia at shoot apical meristems at high temperatures. This Arabidopsis thaliana (Mouse-ear cress) protein is Protein ASYMMETRIC LEAVES 2.